We begin with the raw amino-acid sequence, 246 residues long: 2-C-methyl-D-erythritol 4-phosphate cytidylyltransferase (246 aa).

This sequence belongs to the IspD/TarI cytidylyltransferase family. IspD subfamily.

The enzyme catalyses 2-C-methyl-D-erythritol 4-phosphate + CTP + H(+) = 4-CDP-2-C-methyl-D-erythritol + diphosphate. Its pathway is isoprenoid biosynthesis; isopentenyl diphosphate biosynthesis via DXP pathway; isopentenyl diphosphate from 1-deoxy-D-xylulose 5-phosphate: step 2/6. In terms of biological role, catalyzes the formation of 4-diphosphocytidyl-2-C-methyl-D-erythritol from CTP and 2-C-methyl-D-erythritol 4-phosphate (MEP). The sequence is that of 2-C-methyl-D-erythritol 4-phosphate cytidylyltransferase from Chlorobaculum parvum (strain DSM 263 / NCIMB 8327) (Chlorobium vibrioforme subsp. thiosulfatophilum).